The sequence spans 347 residues: tRNA N6-adenosine threonylcarbamoyltransferase (347 aa).

Fe cation is bound by residues H117 and H121. Substrate is bound by residues 140 to 144 (LVSGG), D174, G187, D191, and N281. Position 309 (D309) interacts with Fe cation.

This sequence belongs to the KAE1 / TsaD family. It depends on Fe(2+) as a cofactor.

Its subcellular location is the cytoplasm. The catalysed reaction is L-threonylcarbamoyladenylate + adenosine(37) in tRNA = N(6)-L-threonylcarbamoyladenosine(37) in tRNA + AMP + H(+). Its function is as follows. Required for the formation of a threonylcarbamoyl group on adenosine at position 37 (t(6)A37) in tRNAs that read codons beginning with adenine. Is involved in the transfer of the threonylcarbamoyl moiety of threonylcarbamoyl-AMP (TC-AMP) to the N6 group of A37, together with TsaE and TsaB. TsaD likely plays a direct catalytic role in this reaction. This Thermobifida fusca (strain YX) protein is tRNA N6-adenosine threonylcarbamoyltransferase.